We begin with the raw amino-acid sequence, 226 residues long: Uridylate kinase (226 aa).

9-13 (KVSGK) contributes to the ATP binding site. Gly46 serves as a coordination point for UMP. Residues Gly47 and Arg51 each coordinate ATP. UMP contacts are provided by residues Asp68 and 116–122 (FQPGQST). The ATP site is built by Thr142, Tyr148, and Asp151.

It belongs to the UMP kinase family. In terms of assembly, homohexamer.

It is found in the cytoplasm. The enzyme catalyses UMP + ATP = UDP + ADP. It functions in the pathway pyrimidine metabolism; CTP biosynthesis via de novo pathway; UDP from UMP (UMPK route): step 1/1. Its activity is regulated as follows. Inhibited by UTP. Functionally, catalyzes the reversible phosphorylation of UMP to UDP. The protein is Uridylate kinase of Hyperthermus butylicus (strain DSM 5456 / JCM 9403 / PLM1-5).